Reading from the N-terminus, the 479-residue chain is NAC domain-containing protein 45 (479 aa).

The 152-residue stretch at 6–157 (LPPGFRFHPT…AYALCRVFKK (152 aa)) folds into the NAC domain. Residues 105-163 (IGTKKTLVYYRGRAPHGIRTGWVMHEYRLDETECEPSAYGMQDAYALCRVFKKIVIEAK) mediate DNA binding.

As to expression, expressed in a few sieve element cells before enucleation and in phloem-pole pericycle cells.

Its subcellular location is the nucleus. Transcription factor directing sieve element enucleation and cytosol degradation. Not required for formation of lytic vacuoles. Regulates, with NAC086, the transcription of NEN1, NEN2, NEN3, NEN4, RTM1, RTM2, UBP16, PLDZETA, ABCB10 and At1g26450. The protein is NAC domain-containing protein 45 of Arabidopsis thaliana (Mouse-ear cress).